Reading from the N-terminus, the 899-residue chain is CNK3/IPCEF1 fusion protein (899 aa).

Positions 7–72 (WSPKQVVDWT…LEAVDLLCAL (66 aa)) constitute an SAM domain. One can recognise a CRIC domain in the interval 80-174 (NMKNLVLKLR…TTVQKDCFVA (95 aa)). In terms of domain architecture, PDZ spans 211–293 (EVHLPNIKPG…GVVLLLKKRP (83 aa)). Disordered stretches follow at residues 309–334 (WKPPLVQTSPPPATTQSPESTMDTSL) and 347–390 (PPPP…FLDQ). The 126-residue stretch at 332 to 457 (TSLKKEKSAI…ARPRGHGRKA (126 aa)) folds into the DUF1170 domain. Position 383 is a phosphoserine (Ser-383). Positions 503–602 (HADCQGWLYK…WLNKLGSAVI (100 aa)) constitute a PH domain. Disordered regions lie at residues 605–687 (ESTT…PDTV), 735–770 (LSSDDTSSLSSNHDHLTVPDKPAGSKIMDKEETKVS), and 868–899 (QQQRASPAPDDTDDTPQELKKSPSSPSVENSI). Over residues 613–624 (CYSESEQEDPEI) the composition is skewed to acidic residues. Over residues 634 to 662 (ASQTQSLTAQQASSSSPSLSGTSYSFSSL) the composition is skewed to low complexity. Residues 663-676 (ENTVKTPSSFPSSL) show a composition bias toward polar residues. The span at 735–745 (LSSDDTSSLSS) shows a compositional bias: low complexity. A compositionally biased stretch (basic and acidic residues) spans 761–770 (IMDKEETKVS). A required for interaction with CYTH2 region spans residues 851 to 899 (KYREWKVMNTLLIQDIYQQQRASPAPDDTDDTPQELKKSPSSPSVENSI). Ser-873 is subject to Phosphoserine. The segment covering 889 to 899 (SPSSPSVENSI) has biased composition (polar residues).

The protein belongs to the CNKSR family.

Its function is as follows. Required for hepatocyte growth factor (HGF)-dependent activation of Arf6 and HGF-stimulated cell migration. In Homo sapiens (Human), this protein is CNK3/IPCEF1 fusion protein (CNK3/IPCEF1).